The chain runs to 371 residues: 3-dehydroquinate synthase (371 aa).

NAD(+)-binding positions include 72–77, 106–110, 130–131, K143, K152, and 170–173; these read DGEEHK, GVVGD, TT, and TLKT. E185, H248, and H265 together coordinate Zn(2+).

The protein belongs to the sugar phosphate cyclases superfamily. Dehydroquinate synthase family. Co(2+) is required as a cofactor. Zn(2+) serves as cofactor. The cofactor is NAD(+).

It is found in the cytoplasm. The enzyme catalyses 7-phospho-2-dehydro-3-deoxy-D-arabino-heptonate = 3-dehydroquinate + phosphate. Its pathway is metabolic intermediate biosynthesis; chorismate biosynthesis; chorismate from D-erythrose 4-phosphate and phosphoenolpyruvate: step 2/7. Functionally, catalyzes the conversion of 3-deoxy-D-arabino-heptulosonate 7-phosphate (DAHP) to dehydroquinate (DHQ). The sequence is that of 3-dehydroquinate synthase from Pelotomaculum thermopropionicum (strain DSM 13744 / JCM 10971 / SI).